Consider the following 377-residue polypeptide: Spermidine/putrescine import ATP-binding protein PotA (377 aa).

In terms of domain architecture, ABC transporter spans 18 to 248 (IRLSGISKSF…PKNLFVARFI (231 aa)). 50–57 (GPSGCGKT) provides a ligand contact to ATP.

This sequence belongs to the ABC transporter superfamily. Spermidine/putrescine importer (TC 3.A.1.11.1) family. The complex is composed of two ATP-binding proteins (PotA), two transmembrane proteins (PotB and PotC) and a solute-binding protein (PotD).

The protein localises to the cell inner membrane. The catalysed reaction is ATP + H2O + polyamine-[polyamine-binding protein]Side 1 = ADP + phosphate + polyamineSide 2 + [polyamine-binding protein]Side 1.. Part of the ABC transporter complex PotABCD involved in spermidine/putrescine import. Responsible for energy coupling to the transport system. The protein is Spermidine/putrescine import ATP-binding protein PotA of Vibrio vulnificus (strain CMCP6).